The chain runs to 97 residues: Aspartyl/glutamyl-tRNA(Asn/Gln) amidotransferase subunit C (97 aa).

The protein belongs to the GatC family. In terms of assembly, heterotrimer of A, B and C subunits.

The enzyme catalyses L-glutamyl-tRNA(Gln) + L-glutamine + ATP + H2O = L-glutaminyl-tRNA(Gln) + L-glutamate + ADP + phosphate + H(+). It carries out the reaction L-aspartyl-tRNA(Asn) + L-glutamine + ATP + H2O = L-asparaginyl-tRNA(Asn) + L-glutamate + ADP + phosphate + 2 H(+). Allows the formation of correctly charged Asn-tRNA(Asn) or Gln-tRNA(Gln) through the transamidation of misacylated Asp-tRNA(Asn) or Glu-tRNA(Gln) in organisms which lack either or both of asparaginyl-tRNA or glutaminyl-tRNA synthetases. The reaction takes place in the presence of glutamine and ATP through an activated phospho-Asp-tRNA(Asn) or phospho-Glu-tRNA(Gln). In Prochlorococcus marinus (strain MIT 9303), this protein is Aspartyl/glutamyl-tRNA(Asn/Gln) amidotransferase subunit C.